We begin with the raw amino-acid sequence, 274 residues long: 2,3,4,5-tetrahydropyridine-2,6-dicarboxylate N-succinyltransferase (274 aa).

Residues Arg-104 and Asp-141 each contribute to the substrate site.

The protein belongs to the transferase hexapeptide repeat family. In terms of assembly, homotrimer.

The protein localises to the cytoplasm. It catalyses the reaction (S)-2,3,4,5-tetrahydrodipicolinate + succinyl-CoA + H2O = (S)-2-succinylamino-6-oxoheptanedioate + CoA. It participates in amino-acid biosynthesis; L-lysine biosynthesis via DAP pathway; LL-2,6-diaminopimelate from (S)-tetrahydrodipicolinate (succinylase route): step 1/3. The chain is 2,3,4,5-tetrahydropyridine-2,6-dicarboxylate N-succinyltransferase from Shewanella sediminis (strain HAW-EB3).